Here is a 414-residue protein sequence, read N- to C-terminus: Serine-type anaerobic sulfatase-maturating enzyme (414 aa).

The Radical SAM core domain occupies 5–250 (TYAPFAKPLY…LCTIFDEWVK (246 aa)). 2 residues coordinate [4Fe-4S] cluster: Cys24 and Cys28. S-adenosyl-L-methionine is bound at residue Tyr30. Cys31 contributes to the [4Fe-4S] cluster binding site. S-adenosyl-L-methionine-binding residues include Gly76, Ser131, and Arg143. [4Fe-4S] cluster contacts are provided by Cys276, Cys282, and Cys297. Asp298 acts as the Proton acceptor in catalysis. Residues Cys339, Cys342, Cys348, Cys352, and Cys371 each contribute to the [4Fe-4S] cluster site.

This sequence belongs to the radical SAM superfamily. Anaerobic sulfatase-maturating enzyme family. Requires [4Fe-4S] cluster as cofactor.

The enzyme catalyses L-seryl-[sulfatase] + S-adenosyl-L-methionine = 3-oxo-L-alanyl-[sulfatase] + 5'-deoxyadenosine + L-methionine + H(+). Its pathway is protein modification; sulfatase oxidation. In terms of biological role, involved in 'Ser-type' sulfatase maturation under anaerobic conditions. Links the heparin and the chondroitin sulfate utilization pathways which contribute to the colonization of the intestinal tract. May catalyze the activation of chondro-6-sulfatase, i.e. the post-translational modification of a specific serine residue into 3-oxoalanine (also known as C(alpha)-formylglycine (FGly)), by a free radical chemical mechanism initiated via the reductive cleavage of S-adenosyl-L-methionine (SAM). Is also able to oxidize a cysteine residue in a synthetic substrate to FGly in vitro, but not in a recombinant Cys-type sulfatase in vivo. But since B.thetaiotaomicron possesses only Ser-type sulfatases, the oxidation of serine residues to FGly is the sole physiological activity. This is Serine-type anaerobic sulfatase-maturating enzyme (chuR) from Bacteroides thetaiotaomicron (strain ATCC 29148 / DSM 2079 / JCM 5827 / CCUG 10774 / NCTC 10582 / VPI-5482 / E50).